The primary structure comprises 751 residues: Nibrin (751 aa).

The FHA domain occupies Tyr24–Met83. 2 consecutive BRCT domains span residues Lys105–Leu181 and Gly224–Ile315. The tract at residues Glu111–Gln328 is mediates interaction with SP100. The segment at Ile221–Asn403 is interaction with MTOR, MAPKAP1 and RICTOR. Thr337 carries the post-translational modification Phosphothreonine. Ser343 is modified (phosphoserine; by ATM). Residues Ser347 and Ser398 each carry the phosphoserine modification. Positions Gly389 to Ala418 are disordered. A Phosphoserine; by CDK2 modification is found at Ser433. Lys436 participates in a covalent cross-link: Glycyl lysine isopeptide (Lys-Gly) (interchain with G-Cter in ubiquitin). Disordered stretches follow at residues Lys444–Lys479 and Glu491–Lys550. Residues Trp446 to Asn457 are compositionally biased toward polar residues. The short motif at Pro461–Glu467 is the Nuclear localization signal element. Basic and acidic residues-rich tracts occupy residues Lys502–Asp518 and Glu528–Leu539. Phosphoserine is present on Ser508. Residues Lys569 and Lys580 each participate in a glycyl lysine isopeptide (Lys-Gly) (interchain with G-Cter in SUMO2) cross-link. A disordered region spans residues Val576 to Ser645. Basic and acidic residues-rich tracts occupy residues Lys577–Arg599 and Glu615–Ala636. Residues Lys684, Lys688, and Lys733 each participate in a glycyl lysine isopeptide (Lys-Gly) (interchain with G-Cter in ubiquitin) cross-link. The span at Gln731–Phe742 shows a compositional bias: basic and acidic residues. A disordered region spans residues Gln731–Arg751. Positions Ala738–Asn747 match the FxF/Y motif motif.

Belongs to the Nibrin family. Component of the MRN complex composed of two heterodimers RAD50 and MRE11 associated with a single NBN. The MRN complexes dimerize on DNA to form joined MRN-MRN oligomers required for DNA double-strand break repair. As part of the MRN complex, interacts with MCM9; the interaction recruits the complex to DNA repair sites. Component of the BASC complex, at least composed of BRCA1, MSH2, MSH6, MLH1, ATM, BLM, RAD50, MRE11 and NBN. Interacts with histone H2AX; this requires phosphorylation of H2AX on 'Ser-139' and promotes NBN recruitment to DNA damage sites. Interacts with (phosphorylated) MDC1; promoting NBN recruitment to DNA damage sites. Interacts with (phosphorylated) RAD17; promoting NBN recruitment to DNA damage sites. Interacts (via FxF/Y motif) with ATM. Interacts with HJURP. Interacts with INTS3. Interacts with KPNA2. Interacts with TERF2; interaction is disrupted upon NBN phosphorylation by CDK2. Interacts with (phosphorylated) RBBP8/CtIP; the interaction links the role of the MRN complex in DNA double-strand break sensing to resection. Interacts with SP100; recruits NBN to PML bodies. Interacts with ATF2. Interacts with MTOR, MAPKAP1 isoform 2 and RICTOR; indicative for an association with the mTORC2 complex. Interacts with MRNIP. Interacts with UFL1; promoting UFL1 recruitment to double-strand breaks following DNA damage. Interacts with CYREN (via XLF motif). In terms of processing, ubiquitinated at Lys-436 via 'Lys-6'-linked ubiquitin chains by RNF8, promoting NBN recruitment to DNA double-strand breaks (DSBs). Ubiquitinated at Lys-684 and Lys-688 via 'Lys-63'-linked ubiquitin chains by PELI1: ubiquitination takes place following PELI1 phosphorylation and promotes ATM activation and DNA repair. Ubiquitinated at Lys-733 via 'Lys-63'-linked ubiquitin chains by the SCF(SKP2) complex: ubiquitination takes place following SKP2 phosphorylation and promotes ATM activation and DNA repair. Phosphorylated by ATM in response of ionizing radiation, and such phosphorylation is responsible intra-S phase checkpoint control and telomere maintenance. Phosphorylated at Ser-433 by CDK2 in S/G2 phases abolishes interaction with TERF2, enabling DCLRE1B/Apollo recruitment to telomeres. Phosphorylation at Ser-433 in response to dysfunctional telomeres promotes non-homologous end joining repair at telomeres, while dephosphorylation by PPP1CA promotes microhomology-mediated end-joining (MMEJ) repair. High expression in the liver, heart and testis. Low expression in all other tissues analyzed. In the cerebellum the postmitotic Purkinje cells are marked specifically.

It localises to the nucleus. Its subcellular location is the chromosome. The protein localises to the PML body. The protein resides in the telomere. Component of the MRN complex, which plays a central role in double-strand break (DSB) repair, DNA recombination, maintenance of telomere integrity and meiosis. The MRN complex is involved in the repair of DNA double-strand breaks (DSBs) via homologous recombination (HR), an error-free mechanism which primarily occurs during S and G2 phases. The complex (1) mediates the end resection of damaged DNA, which generates proper single-stranded DNA, a key initial steps in HR, and is (2) required for the recruitment of other repair factors and efficient activation of ATM and ATR upon DNA damage. The MRN complex possesses single-strand endonuclease activity and double-strand-specific 3'-5' exonuclease activity, which are provided by MRE11, to initiate end resection, which is required for single-strand invasion and recombination. Within the MRN complex, NBN acts as a protein-protein adapter, which specifically recognizes and binds phosphorylated proteins, promoting their recruitment to DNA damage sites. Recruits MRE11 and RAD50 components of the MRN complex to DSBs in response to DNA damage. Promotes the recruitment of PI3/PI4-kinase family members ATM, ATR, and probably DNA-PKcs to the DNA damage sites, activating their functions. Mediates the recruitment of phosphorylated RBBP8/CtIP to DSBs, leading to cooperation between the MRN complex and RBBP8/CtIP to initiate end resection. RBBP8/CtIP specifically promotes the endonuclease activity of the MRN complex to clear DNA ends containing protein adducts. The MRN complex is also required for the processing of R-loops. NBN also functions in telomere length maintenance via its interaction with TERF2: interaction with TERF2 during G1 phase preventing recruitment of DCLRE1B/Apollo to telomeres. NBN also promotes DNA repair choice at dysfunctional telomeres: NBN phosphorylation by CDK2 promotes non-homologous end joining repair at telomeres, while unphosphorylated NBN promotes microhomology-mediated end-joining (MMEJ) repair. Enhances AKT1 phosphorylation possibly by association with the mTORC2 complex. The polypeptide is Nibrin (Mus musculus (Mouse)).